The primary structure comprises 569 residues: Alpha-amylase (569 aa).

The N-terminal stretch at 1–28 (MARKTVAAALALVAGAAVAVTGNAPAQA) is a signal peptide. Residues Asn-120, Gln-166, and Asp-175 each coordinate Ca(2+). Catalysis depends on Asp-205, which acts as the Nucleophile. Residue His-209 participates in Ca(2+) binding. The active-site Proton donor is the Glu-232. The CBM20 domain maps to 468 to 569 (TTPPATSGAS…QLVLNDTFRS (102 aa)).

Belongs to the glycosyl hydrolase 13 family. Monomer. It depends on Ca(2+) as a cofactor.

The catalysed reaction is Endohydrolysis of (1-&gt;4)-alpha-D-glucosidic linkages in polysaccharides containing three or more (1-&gt;4)-alpha-linked D-glucose units.. The protein is Alpha-amylase (aml) of Streptomyces violaceus (Streptomyces venezuelae).